Consider the following 72-residue polypeptide: Translation initiation factor IF-1 (72 aa).

Positions 1-72 constitute an S1-like domain; sequence MAKQSAIEQD…SKGRIVFRYK (72 aa).

Belongs to the IF-1 family. As to quaternary structure, component of the 30S ribosomal translation pre-initiation complex which assembles on the 30S ribosome in the order IF-2 and IF-3, IF-1 and N-formylmethionyl-tRNA(fMet); mRNA recruitment can occur at any time during PIC assembly.

The protein localises to the cytoplasm. Functionally, one of the essential components for the initiation of protein synthesis. Stabilizes the binding of IF-2 and IF-3 on the 30S subunit to which N-formylmethionyl-tRNA(fMet) subsequently binds. Helps modulate mRNA selection, yielding the 30S pre-initiation complex (PIC). Upon addition of the 50S ribosomal subunit IF-1, IF-2 and IF-3 are released leaving the mature 70S translation initiation complex. This Bacteroides fragilis (strain ATCC 25285 / DSM 2151 / CCUG 4856 / JCM 11019 / LMG 10263 / NCTC 9343 / Onslow / VPI 2553 / EN-2) protein is Translation initiation factor IF-1.